The sequence spans 505 residues: Deoxyguanosinetriphosphate triphosphohydrolase (505 aa).

Residues arginine 66–cysteine 273 form the HD domain.

This sequence belongs to the dGTPase family. Type 1 subfamily. Homotetramer. Mg(2+) is required as a cofactor.

The catalysed reaction is dGTP + H2O = 2'-deoxyguanosine + triphosphate + H(+). In terms of biological role, dGTPase preferentially hydrolyzes dGTP over the other canonical NTPs. The polypeptide is Deoxyguanosinetriphosphate triphosphohydrolase (Escherichia coli O157:H7).